The chain runs to 261 residues: MIFWLRSVIVTFGRPAEWPRCLRHLCSRGAAMDLGPMRKTYRGDPEAFEETHLTSLDPVKQFAAWFEEAVQCPDIMEANAMCLATCTRDGKPSARMVLLKGFGKDGFRFFTNFESRKGKELDSNPFASLVFYWEPLHRQVRVEGPVKKLPEEEAECYFHSRPKSSQIGAVVSHQSSVIPDREYLRKKNKELEQLYQEQEVPKPKYWGGYILYPQVMEFWQGQTNRLHDRIVFRRGLLTGDSPLGPMTHRGEEDWVYERLAP.

Position 42–45 (42–45 (RGDP)) interacts with pyridoxal 5'-phosphate. Residue 95–98 (RMVL) participates in FMN binding. Lys100 contacts pyridoxal 5'-phosphate. FMN is bound by residues 110 to 111 (FT), 116 to 117 (RK), and Gln139. Pyridoxal 5'-phosphate contacts are provided by Tyr157, Arg161, and Ser165. FMN-binding positions include 174-175 (QS) and Trp219. 225–227 (RLH) is a binding site for pyridoxal 5'-phosphate. Residue Arg229 participates in FMN binding. Residue Thr238 is modified to Phosphothreonine. A Phosphoserine modification is found at Ser241.

This sequence belongs to the pyridoxamine 5'-phosphate oxidase family. Homodimer. FMN serves as cofactor.

It carries out the reaction pyridoxamine 5'-phosphate + O2 + H2O = pyridoxal 5'-phosphate + H2O2 + NH4(+). It catalyses the reaction pyridoxine 5'-phosphate + O2 = pyridoxal 5'-phosphate + H2O2. The protein operates within cofactor metabolism; pyridoxal 5'-phosphate salvage; pyridoxal 5'-phosphate from pyridoxamine 5'-phosphate: step 1/1. Its pathway is cofactor metabolism; pyridoxal 5'-phosphate salvage; pyridoxal 5'-phosphate from pyridoxine 5'-phosphate: step 1/1. Catalyzes the oxidation of either pyridoxine 5'-phosphate (PNP) or pyridoxamine 5'-phosphate (PMP) into pyridoxal 5'-phosphate (PLP). This Bos taurus (Bovine) protein is Pyridoxine-5'-phosphate oxidase (PNPO).